The sequence spans 176 residues: Gamma-crystallin M2 (176 aa).

Beta/gamma crystallin 'Greek key' domains follow at residues 2–40 (GKVI…RVEG) and 41–83 (GCWV…RIIP). Residues 84-88 (QYRGS) form a connecting peptide region. Beta/gamma crystallin 'Greek key' domains are found at residues 89–129 (YRMR…HVMD) and 130–172 (GYWI…RRIM).

Belongs to the beta/gamma-crystallin family. In terms of assembly, monomer.

In terms of biological role, crystallins are the dominant structural components of the vertebrate eye lens. The chain is Gamma-crystallin M2 (GM2) from Chiloscyllium indicum (Slender bamboo shark).